Here is a 141-residue protein sequence, read N- to C-terminus: Metallothiol transferase FosB (141 aa).

In terms of domain architecture, VOC spans 5–120 (SINHLLFSVS…DGHKFEFHTG (116 aa)). Residues His-8, His-67, and Glu-116 each coordinate Mg(2+). Glu-116 functions as the Proton donor/acceptor in the catalytic mechanism.

Belongs to the fosfomycin resistance protein family. FosB subfamily. Homodimer. The cofactor is Mg(2+).

It localises to the cytoplasm. Its function is as follows. Metallothiol transferase which confers resistance to fosfomycin by catalyzing the addition of a thiol cofactor to fosfomycin. L-cysteine is probably the physiological thiol donor. In Lysinibacillus sphaericus (strain C3-41), this protein is Metallothiol transferase FosB.